Consider the following 379-residue polypeptide: Alcohol dehydrogenase 2 (379 aa).

Positions 47, 49, 69, 99, 102, 105, 113, and 177 each coordinate Zn(2+). 2 residues coordinate an alcohol: threonine 49 and histidine 69. Threonine 49 lines the NAD(+) pocket. Residues 202-207 (GLGAVG), aspartate 226, lysine 231, threonine 272, valine 295, 295-297 (VGV), phenylalanine 322, and arginine 372 contribute to the NAD(+) site.

It belongs to the zinc-containing alcohol dehydrogenase family. Homodimer. The cofactor is Zn(2+).

It localises to the cytoplasm. It catalyses the reaction a primary alcohol + NAD(+) = an aldehyde + NADH + H(+). The enzyme catalyses a secondary alcohol + NAD(+) = a ketone + NADH + H(+). The protein is Alcohol dehydrogenase 2 (ADH2) of Oryza sativa subsp. indica (Rice).